The following is a 430-amino-acid chain: Corticosteroid-binding globulin (430 aa).

The N-terminal stretch at 1-22 (MLLTLYTCLLWLSTSGLWTIQA) is a signal peptide. Residues Asn-119, Asn-175, and Asn-243 are each glycosylated (N-linked (GlcNAc...) asparagine). Residue Gln-253 coordinates cortisol. Asn-259 carries an N-linked (GlcNAc...) asparagine glycan. A cortisol-binding site is contributed by Gln-285. A glycan (N-linked (GlcNAc...) asparagine) is linked at Asn-326. Trp-392 is a binding site for cortisol.

Belongs to the serpin family. As to expression, expressed by the liver; secreted in plasma.

The protein localises to the secreted. In terms of biological role, major transport protein for glucocorticoids and progestins in the blood of almost all vertebrate species. This chain is Corticosteroid-binding globulin (SERPINA6), found in Ovis aries (Sheep).